Consider the following 549-residue polypeptide: Cytoplasmic trehalase (549 aa).

Residues Arg168, 175 to 176 (WD), Asn212, 221 to 223 (RSQ), 292 to 294 (RDE), and Gly324 contribute to the substrate site. Residues Asp326 and Glu509 each act as proton donor/acceptor in the active site. Substrate is bound at residue Glu525.

This sequence belongs to the glycosyl hydrolase 37 family. As to quaternary structure, monomer.

The protein localises to the cytoplasm. It carries out the reaction alpha,alpha-trehalose + H2O = alpha-D-glucose + beta-D-glucose. The protein operates within glycan degradation; trehalose degradation; D-glucose from alpha,alpha-trehalose: step 1/1. Functionally, hydrolyzes trehalose to glucose. Could be involved, in cells returning to low osmolarity conditions, in the utilization of the accumulated cytoplasmic trehalose, which was synthesized in response to high osmolarity. The polypeptide is Cytoplasmic trehalase (Escherichia fergusonii (strain ATCC 35469 / DSM 13698 / CCUG 18766 / IAM 14443 / JCM 21226 / LMG 7866 / NBRC 102419 / NCTC 12128 / CDC 0568-73)).